A 165-amino-acid chain; its full sequence is Thiol peroxidase (165 aa).

Residues 18 to 165 (PQVGDNLAEF…DYDAALAALN (148 aa)) form the Thioredoxin domain. C60 serves as the catalytic Cysteine sulfenic acid (-SOH) intermediate. A disulfide bridge links C60 with C94.

It belongs to the peroxiredoxin family. Tpx subfamily. Homodimer.

It catalyses the reaction a hydroperoxide + [thioredoxin]-dithiol = an alcohol + [thioredoxin]-disulfide + H2O. Thiol-specific peroxidase that catalyzes the reduction of hydrogen peroxide and organic hydroperoxides to water and alcohols, respectively. Plays a role in cell protection against oxidative stress by detoxifying peroxides. The chain is Thiol peroxidase from Corynebacterium glutamicum (strain ATCC 13032 / DSM 20300 / JCM 1318 / BCRC 11384 / CCUG 27702 / LMG 3730 / NBRC 12168 / NCIMB 10025 / NRRL B-2784 / 534).